A 429-amino-acid polypeptide reads, in one-letter code: S-adenosylmethionine synthase (429 aa).

His-14 is an ATP binding site. Asp-16 lines the Mg(2+) pocket. Glu-42 is a binding site for K(+). Glu-55 and Gln-98 together coordinate L-methionine. The tract at residues 98-108 (QSADINRGVDR) is flexible loop. Residues 165 to 167 (DAK), 252 to 253 (KF), Asp-261, 267 to 268 (RK), Ala-284, and Lys-288 contribute to the ATP site. Asp-261 contacts L-methionine. Lys-292 provides a ligand contact to L-methionine.

It belongs to the AdoMet synthase family. In terms of assembly, homotetramer; dimer of dimers. It depends on Mg(2+) as a cofactor. K(+) serves as cofactor.

The protein localises to the cytoplasm. The catalysed reaction is L-methionine + ATP + H2O = S-adenosyl-L-methionine + phosphate + diphosphate. Its pathway is amino-acid biosynthesis; S-adenosyl-L-methionine biosynthesis; S-adenosyl-L-methionine from L-methionine: step 1/1. Functionally, catalyzes the formation of S-adenosylmethionine (AdoMet) from methionine and ATP. The overall synthetic reaction is composed of two sequential steps, AdoMet formation and the subsequent tripolyphosphate hydrolysis which occurs prior to release of AdoMet from the enzyme. The polypeptide is S-adenosylmethionine synthase (Porphyromonas gingivalis (strain ATCC BAA-308 / W83)).